Consider the following 230-residue polypeptide: 2,3-bisphosphoglycerate-dependent phosphoglycerate mutase (230 aa).

Substrate contacts are provided by residues 10 to 17 (RHGQSKWN), 23 to 24 (TG), Arg62, 89 to 92 (ERHY), Lys100, 116 to 117 (RR), and 185 to 186 (GN). The active-site Tele-phosphohistidine intermediate is His11. Glu89 functions as the Proton donor/acceptor in the catalytic mechanism.

The protein belongs to the phosphoglycerate mutase family. BPG-dependent PGAM subfamily. In terms of assembly, homodimer.

It catalyses the reaction (2R)-2-phosphoglycerate = (2R)-3-phosphoglycerate. The protein operates within carbohydrate degradation; glycolysis; pyruvate from D-glyceraldehyde 3-phosphate: step 3/5. Its function is as follows. Catalyzes the interconversion of 2-phosphoglycerate and 3-phosphoglycerate. This is 2,3-bisphosphoglycerate-dependent phosphoglycerate mutase from Buchnera aphidicola subsp. Schizaphis graminum (strain Sg).